Consider the following 418-residue polypeptide: MDFLQINGGAKLNGKVKISGAKNAALPLIAMSILAGNDIKISNVPNVADIKTLAQLLRNLGASAEFLNENSLKINTNDINSTKATYDIVRKMRASILVLGPLLARFGHCEVSLPGGCAIGARPIDLHLSALEKMGAEIDIKDGYVVCKGKLKGATISFDKITVTGTENIVMAAALAEGKTKIINAAKEPEVVQLCEMINKSGVKIEGIGTDDLTIYGSGGKLLKFSDFSVIPDRIEAGTYLCAGAITKSKITITNANPNHLVSVLAKFNDMGFNFEINDDEITIIPPKTIKPTEIITSEYPGFPTDMQAQFMALACVADGVSVIDERLFENRFMHVSELSRMGADIKLNGHIATINGTHLNAADVMATDLRASSALVLAALVAKGTSRVHRIYHLDRGYENLELKLRNLGADIQRASE.

22–23 (KN) is a phosphoenolpyruvate binding site. UDP-N-acetyl-alpha-D-glucosamine is bound at residue Arg93. Cys117 functions as the Proton donor in the catalytic mechanism. Cys117 bears the 2-(S-cysteinyl)pyruvic acid O-phosphothioketal mark. Residues 122 to 126 (RPIDL), Asp306, and Leu328 each bind UDP-N-acetyl-alpha-D-glucosamine.

Belongs to the EPSP synthase family. MurA subfamily.

It localises to the cytoplasm. It carries out the reaction phosphoenolpyruvate + UDP-N-acetyl-alpha-D-glucosamine = UDP-N-acetyl-3-O-(1-carboxyvinyl)-alpha-D-glucosamine + phosphate. It participates in cell wall biogenesis; peptidoglycan biosynthesis. Its function is as follows. Cell wall formation. Adds enolpyruvyl to UDP-N-acetylglucosamine. This Campylobacter hominis (strain ATCC BAA-381 / DSM 21671 / CCUG 45161 / LMG 19568 / NCTC 13146 / CH001A) protein is UDP-N-acetylglucosamine 1-carboxyvinyltransferase.